The chain runs to 207 residues: High frequency lysogenization protein HflD homolog (207 aa).

It belongs to the HflD family.

The protein resides in the cytoplasm. Its subcellular location is the cell inner membrane. In Methylococcus capsulatus (strain ATCC 33009 / NCIMB 11132 / Bath), this protein is High frequency lysogenization protein HflD homolog.